Consider the following 1308-residue polypeptide: Transposon TX1 uncharacterized 149 kDa protein (1308 aa).

Residues 494-765 (EAFKKGELPL…KIIKYLGVYL (272 aa)) form the Reverse transcriptase domain.

This chain is Transposon TX1 uncharacterized 149 kDa protein, found in Xenopus laevis (African clawed frog).